The following is a 114-amino-acid chain: Non-specific lipid-transfer protein 2 (114 aa).

The N-terminal stretch at 1–23 (MEMVNKIACFVLLCMVVVAPHAE) is a signal peptide. Cystine bridges form between C27/C73, C37/C50, C51/C96, and C71/C110.

It belongs to the plant LTP family.

Its function is as follows. Plant non-specific lipid-transfer proteins transfer phospholipids as well as galactolipids across membranes. May play a role in wax or cutin deposition in the cell walls of expanding epidermal cells and certain secretory tissues. The protein is Non-specific lipid-transfer protein 2 of Solanum chilense (Tomato).